A 344-amino-acid chain; its full sequence is Unsaturated rhamnogalacturonyl hydrolase YesR (344 aa).

Residues 30–31 (DW), N74, and 118–128 (QHTVNAAEYVF) contribute to the substrate site. D135 acts as the Proton donor in catalysis. Substrate is bound by residues 198-202 (RANGW) and 308-309 (NA).

Belongs to the glycosyl hydrolase 105 family. In terms of assembly, monomer.

The protein resides in the cytoplasm. It catalyses the reaction 2-O-(4-deoxy-beta-L-threo-hex-4-enopyranuronosyl)-alpha-L-rhamnose + H2O = 5-dehydro-4-deoxy-D-glucuronate + L-rhamnopyranose. Functionally, catalyzes the hydrolysis of unsaturated rhamnogalacturonan disaccharide to yield unsaturated D-galacturonic acid and L-rhamnose. It cannot act on unsaturated glucuronyl hydrolase (UGL) substrates containing unsaturated D-glucuronic acid at the non-reducing terminus, although the active pockets of YesR and UGL are very similar. The protein is Unsaturated rhamnogalacturonyl hydrolase YesR (yesR) of Bacillus subtilis (strain 168).